The chain runs to 577 residues: Cytochrome P450 714D1 (577 aa).

The Lumenal segment spans residues 1 to 3 (MES). The chain crosses the membrane as a helical; Signal-anchor for type III membrane protein span at residues 4–24 (FFVFFTAAALPVVVAAAVIAG). The Cytoplasmic segment spans residues 25–577 (LCITAAWLAR…STAPVHSSHN (553 aa)). Residues 315–343 (REHGGKAAPPSPPERDFLGSIIENSGGQP) are disordered. Cys-504 contributes to the heme binding site.

Belongs to the cytochrome P450 family. Heme is required as a cofactor. As to expression, expressed in rapidly elongating or dividing tissues, including the shoot apical meristem, the intercalary meristem and elongating zones of internodes, and panicle but not in young seedlings, roots and leaves. During the heading stage, the highest expression is detected in the flowering spikelets, anthers, the divisional zone and the node of the uppermost internode.

The protein resides in the endoplasmic reticulum membrane. Its function is as follows. Catalyzes the 16alpha,17-epoxidation on non-13-hydroxylated gibberellins (GAs), including GA4, GA9, and GA12. No activity with GA1, GA20, GA53 or ent-kaurenoic acid. Reduces the biological activity of GAs. This Oryza sativa subsp. japonica (Rice) protein is Cytochrome P450 714D1 (CYP714D1).